The primary structure comprises 245 residues: Uridylate kinase (245 aa).

12–15 (KLSG) contacts ATP. The segment at 20 to 25 (GEKGVG) is involved in allosteric activation by GTP. Glycine 54 lines the UMP pocket. Glycine 55 and arginine 59 together coordinate ATP. UMP is bound by residues aspartate 74 and 135-142 (VGSPYFST). ATP contacts are provided by asparagine 163, tyrosine 169, and aspartate 172.

The protein belongs to the UMP kinase family. Homohexamer.

The protein localises to the cytoplasm. It catalyses the reaction UMP + ATP = UDP + ADP. It functions in the pathway pyrimidine metabolism; CTP biosynthesis via de novo pathway; UDP from UMP (UMPK route): step 1/1. Allosterically activated by GTP. Inhibited by UTP. In terms of biological role, catalyzes the reversible phosphorylation of UMP to UDP. This Streptococcus mutans serotype c (strain ATCC 700610 / UA159) protein is Uridylate kinase.